The chain runs to 207 residues: Ribonuclease HII (207 aa).

The RNase H type-2 domain occupies Arg-17–Asp-207. Residues Asp-23, Glu-24, and Asp-120 each coordinate a divalent metal cation.

The protein belongs to the RNase HII family. The cofactor is Mn(2+). Mg(2+) is required as a cofactor.

The protein resides in the cytoplasm. It carries out the reaction Endonucleolytic cleavage to 5'-phosphomonoester.. In terms of biological role, endonuclease that specifically degrades the RNA of RNA-DNA hybrids. This chain is Ribonuclease HII, found in Herpetosiphon aurantiacus (strain ATCC 23779 / DSM 785 / 114-95).